The following is a 796-amino-acid chain: Phenylalanine--tRNA ligase beta subunit (796 aa).

The 111-residue stretch at 39–149 (SAALKSFRVA…GDAPLGTTFA (111 aa)) folds into the tRNA-binding domain. The 73-residue stretch at 398 to 470 (LARKALAYDP…RVHGLDAVPS (73 aa)) folds into the B5 domain. Mg(2+) contacts are provided by aspartate 448, aspartate 454, glutamate 457, and glutamate 458. The region spanning 703–795 (PALQAVTRDF…AAGKLGAELR (93 aa)) is the FDX-ACB domain.

It belongs to the phenylalanyl-tRNA synthetase beta subunit family. Type 1 subfamily. In terms of assembly, tetramer of two alpha and two beta subunits. Requires Mg(2+) as cofactor.

It is found in the cytoplasm. It catalyses the reaction tRNA(Phe) + L-phenylalanine + ATP = L-phenylalanyl-tRNA(Phe) + AMP + diphosphate + H(+). The polypeptide is Phenylalanine--tRNA ligase beta subunit (Novosphingobium aromaticivorans (strain ATCC 700278 / DSM 12444 / CCUG 56034 / CIP 105152 / NBRC 16084 / F199)).